A 352-amino-acid polypeptide reads, in one-letter code: Nicotinate-nucleotide--dimethylbenzimidazole phosphoribosyltransferase (352 aa).

Glu318 (proton acceptor) is an active-site residue.

This sequence belongs to the CobT family.

The catalysed reaction is 5,6-dimethylbenzimidazole + nicotinate beta-D-ribonucleotide = alpha-ribazole 5'-phosphate + nicotinate + H(+). It functions in the pathway nucleoside biosynthesis; alpha-ribazole biosynthesis; alpha-ribazole from 5,6-dimethylbenzimidazole: step 1/2. Catalyzes the synthesis of alpha-ribazole-5'-phosphate from nicotinate mononucleotide (NAMN) and 5,6-dimethylbenzimidazole (DMB). The polypeptide is Nicotinate-nucleotide--dimethylbenzimidazole phosphoribosyltransferase (Geobacter sulfurreducens (strain ATCC 51573 / DSM 12127 / PCA)).